We begin with the raw amino-acid sequence, 135 residues long: ATP synthase epsilon chain (135 aa).

This sequence belongs to the ATPase epsilon chain family. F-type ATPases have 2 components, CF(1) - the catalytic core - and CF(0) - the membrane proton channel. CF(1) has five subunits: alpha(3), beta(3), gamma(1), delta(1), epsilon(1). CF(0) has three main subunits: a, b and c.

The protein localises to the cell inner membrane. Functionally, produces ATP from ADP in the presence of a proton gradient across the membrane. In Hyphomonas neptunium (strain ATCC 15444), this protein is ATP synthase epsilon chain.